An 82-amino-acid polypeptide reads, in one-letter code: MVDINQIPTRRPFHRRRKTCPFSGANAPKIDYKDVRLLQRYISERGKIVPSRITAVSQKKQRELAKAIKRARFLGLLPYVVR.

A disordered region spans residues 1–20 (MVDINQIPTRRPFHRRRKTC).

This sequence belongs to the bacterial ribosomal protein bS18 family. Part of the 30S ribosomal subunit. Forms a tight heterodimer with protein bS6.

Binds as a heterodimer with protein bS6 to the central domain of the 16S rRNA, where it helps stabilize the platform of the 30S subunit. The protein is Small ribosomal subunit protein bS18 of Mesorhizobium japonicum (strain LMG 29417 / CECT 9101 / MAFF 303099) (Mesorhizobium loti (strain MAFF 303099)).